The following is a 163-amino-acid chain: Lipoprotein signal peptidase (163 aa).

3 consecutive transmembrane segments (helical) span residues Ile11 to Thr31, Met64 to Asn84, and Tyr88 to Ile108. Residues Asp118 and Asp136 contribute to the active site. A helical transmembrane segment spans residues Ile131–Leu151.

Belongs to the peptidase A8 family.

Its subcellular location is the cell membrane. The catalysed reaction is Release of signal peptides from bacterial membrane prolipoproteins. Hydrolyzes -Xaa-Yaa-Zaa-|-(S,diacylglyceryl)Cys-, in which Xaa is hydrophobic (preferably Leu), and Yaa (Ala or Ser) and Zaa (Gly or Ala) have small, neutral side chains.. It functions in the pathway protein modification; lipoprotein biosynthesis (signal peptide cleavage). In terms of biological role, this protein specifically catalyzes the removal of signal peptides from prolipoproteins. The chain is Lipoprotein signal peptidase from Staphylococcus aureus (strain bovine RF122 / ET3-1).